The chain runs to 253 residues: Triosephosphate isomerase (253 aa).

9-11 contributes to the substrate binding site; sequence NWK. His95 acts as the Electrophile in catalysis. Glu167 functions as the Proton acceptor in the catalytic mechanism. Residues Gly173, Ser213, and 234-235 each bind substrate; that span reads GG. Position 213 is a phosphoserine (Ser213).

Belongs to the triosephosphate isomerase family. In terms of assembly, homodimer.

The protein resides in the cytoplasm. It catalyses the reaction D-glyceraldehyde 3-phosphate = dihydroxyacetone phosphate. Its pathway is carbohydrate biosynthesis; gluconeogenesis. It functions in the pathway carbohydrate degradation; glycolysis; D-glyceraldehyde 3-phosphate from glycerone phosphate: step 1/1. Involved in the gluconeogenesis. Catalyzes stereospecifically the conversion of dihydroxyacetone phosphate (DHAP) to D-glyceraldehyde-3-phosphate (G3P). The chain is Triosephosphate isomerase from Lysinibacillus sphaericus (strain C3-41).